The chain runs to 364 residues: D-alanine--D-alanine ligase A (364 aa).

The region spanning 145-348 is the ATP-grasp domain; the sequence is KRLLRDAGLN…YTDLISRLIE (204 aa). 175 to 230 contributes to the ATP binding site; that stretch reads ESRLGLPLFVKPANQGSSVGVSKVANEAQYQQAVALAFEFDHKVVVEQGIKGREIE. The Mg(2+) site is built by Asp-302, Glu-315, and Asn-317.

The protein belongs to the D-alanine--D-alanine ligase family. The cofactor is Mg(2+). It depends on Mn(2+) as a cofactor.

The protein resides in the cytoplasm. It catalyses the reaction 2 D-alanine + ATP = D-alanyl-D-alanine + ADP + phosphate + H(+). It participates in cell wall biogenesis; peptidoglycan biosynthesis. Its function is as follows. Cell wall formation. In Salmonella typhi, this protein is D-alanine--D-alanine ligase A (ddlA).